We begin with the raw amino-acid sequence, 427 residues long: Putative F-box protein At3g44060 (427 aa).

In terms of domain architecture, F-box spans 1-46; it reads MDCLPDDLLVQILYLLPTKEAVSTSVLSKRWRTLFTRSDNLDFHDP.

The protein is Putative F-box protein At3g44060 of Arabidopsis thaliana (Mouse-ear cress).